A 128-amino-acid chain; its full sequence is Riboflavin kinase (128 aa).

Gly12 to Lys17 contributes to the CDP binding site. Mg(2+)-binding residues include Thr41 and Asn43. The FMN site is built by Thr97 and Glu105. Residue Ile110–Arg113 coordinates CDP.

The protein belongs to the archaeal riboflavin kinase family. Mg(2+) is required as a cofactor.

The catalysed reaction is riboflavin + CTP = CDP + FMN + H(+). The protein operates within cofactor biosynthesis; FMN biosynthesis; FMN from riboflavin (CTP route): step 1/1. Functionally, catalyzes the CTP-dependent phosphorylation of riboflavin (vitamin B2) to form flavin mononucleotide (FMN). This chain is Riboflavin kinase, found in Methanococcus aeolicus (strain ATCC BAA-1280 / DSM 17508 / OCM 812 / Nankai-3).